A 33-amino-acid chain; its full sequence is Potassium channel toxin alpha-KTx 10.4 (33 aa).

Disulfide bonds link C3/C22, C8/C27, and C12/C29.

The protein belongs to the short scorpion toxin superfamily. Potassium channel inhibitor family. Alpha-KTx 10 subfamily. Expressed by the venom gland.

It localises to the secreted. In terms of biological role, blocks human voltage-gated potassium channel Kv1.2/KCNA2 (IC(50)=3.6 nM) and Kv1.3/KCNA3 (IC(50)=72 nM). In Centruroides tecomanus (Scorpion), this protein is Potassium channel toxin alpha-KTx 10.4.